A 524-amino-acid polypeptide reads, in one-letter code: MATVEELYRSYGILADAKDDVGQHKSAYQVIIDGVKGGAKEKRLAAQFIPKFFKHFPDLSDSALNAQLDLCEDEDVSIRRQAIKELSQFATGENLPRVADILTQLLQSDDSAEFNLVNNALLSIFKMDAKGTLGGLFSQILQGEDIVRERAIKFLATKMKTLPEETLTKEVDDYIFSESKKVLYDVTGEEFVLFMKILSALKNLQTVSGRQQLVDLVSEQAGLHQTLNPADPDSVDRLLQCMRQAVPLFSKNVHSTKFVTYFCEQVLPILSTLTSPAESIDVQLEVLKLLAEMSSFCGDMDKLESNLNKLFDKLLEFMPLPPEEVENGDTAANEEPKLQFSYVECLLFSFHQLGRKLPDFLIAKVDAEKLKDFKIRLQYFARGLQVYIRQLRLALQGKSGDALKTEENKIKVVALKITNNINVLIKDLFHNPPSYKSTVTLSWKPVQRTPDSGQKRTSDETSSTSPPKKPIVGPKRDSRQIYNPPSGKYSASVGAFSYEQRGGFQGGRGRGWGGRGNRSRGRIY.

The tract at residues 1 to 360 is ARM-like and Heat-like helical repeats; sequence MATVEELYRS…HQLGRKLPDF (360 aa). The segment at 440-524 is disordered; that stretch reads TLSWKPVQRT…RGNRSRGRIY (85 aa). The Nuclear localization signal motif lies at 455–476; that stretch reads KRTSDETSSTSPPKKPIVGPKR. A compositionally biased stretch (gly residues) spans 503–516; that stretch reads GFQGGRGRGWGGRG.

This sequence belongs to the API5 family. In terms of assembly, monomer.

Its subcellular location is the nucleus. Its function is as follows. May be an antiapoptotic factor. The protein is Apoptosis inhibitor 5-A (api5-a) of Xenopus laevis (African clawed frog).